The primary structure comprises 314 residues: Phosphoribosylaminoimidazole-succinocarboxamide synthase (314 aa).

The protein belongs to the SAICAR synthetase family.

The enzyme catalyses 5-amino-1-(5-phospho-D-ribosyl)imidazole-4-carboxylate + L-aspartate + ATP = (2S)-2-[5-amino-1-(5-phospho-beta-D-ribosyl)imidazole-4-carboxamido]succinate + ADP + phosphate + 2 H(+). It functions in the pathway purine metabolism; IMP biosynthesis via de novo pathway; 5-amino-1-(5-phospho-D-ribosyl)imidazole-4-carboxamide from 5-amino-1-(5-phospho-D-ribosyl)imidazole-4-carboxylate: step 1/2. The chain is Phosphoribosylaminoimidazole-succinocarboxamide synthase from Bacteroides thetaiotaomicron (strain ATCC 29148 / DSM 2079 / JCM 5827 / CCUG 10774 / NCTC 10582 / VPI-5482 / E50).